A 237-amino-acid chain; its full sequence is (5-formylfuran-3-yl)methyl phosphate synthase (237 aa).

Lys-27 acts as the Schiff-base intermediate with substrate in catalysis. Lys-85 functions as the Proton acceptor in the catalytic mechanism.

The protein belongs to the MfnB family.

It carries out the reaction 2 D-glyceraldehyde 3-phosphate = 4-(hydroxymethyl)-2-furancarboxaldehyde phosphate + phosphate + 2 H2O. It participates in cofactor biosynthesis; methanofuran biosynthesis. Its function is as follows. Catalyzes the formation of 4-(hydroxymethyl)-2-furancarboxaldehyde phosphate (4-HFC-P) from two molecules of glyceraldehyde-3-P (GA-3-P). In Methanobrevibacter smithii (strain ATCC 35061 / DSM 861 / OCM 144 / PS), this protein is (5-formylfuran-3-yl)methyl phosphate synthase.